A 465-amino-acid polypeptide reads, in one-letter code: Protein CitXG (465 aa).

Residues 1 to 182 (MQHFFTTFST…QSLAQNHDFA (182 aa)) are apo-citrate lyase phosphoribosyl-dephospho-CoA transferase. The interval 183-465 (EHIGEQVYLA…TIFFLSFRGN (283 aa)) is 2-(5''-triphosphoribosyl)-3'-dephosphocoenzyme-A synthase.

It in the N-terminal section; belongs to the CitX family. In the C-terminal section; belongs to the CitG/MdcB family.

It catalyses the reaction apo-[citrate lyase ACP] + 2'-(5''-triphospho-alpha-D-ribosyl)-3'-dephospho-CoA = holo-[citrate lyase ACP] + diphosphate. The enzyme catalyses 3'-dephospho-CoA + ATP = 2'-(5''-triphospho-alpha-D-ribosyl)-3'-dephospho-CoA + adenine. In terms of biological role, bifunctional enzyme that catalyzes formation of 2-(5''-triphosphoribosyl)-3'-dephosphocoenzyme-A, and then the transfer of this prosthetic group precursor to the apo-acyl carrier protein (gamma chain) of the citrate lyase to yield the holo-acyl carrier protein. This Haemophilus influenzae (strain ATCC 51907 / DSM 11121 / KW20 / Rd) protein is Protein CitXG (citXG).